The primary structure comprises 399 residues: MSNKLVLVLNCGSSSLKFAVIDAQTGDDQISGLAECFGLEDSRIKWKINGEKHESSLGAFTAHREAVEFIVNKILAGQPELAAQIQAVGHRIVHGGEKFTRSVIIDEHVIKGIEECSSLAPLHNPAHLIGIRAAIASFPKLPQVAVFDTAFHQSMPERAYIYALPYKLYREHGIRRYGMHGTSHLFVSREAAKVLNKPLEETNVICAHLGNGASVTAVKGGKSVDTSMGLTPLEGLVMGTRCGDLDPSIIYHLVHQLGYTLEEVNNLMNKQSGLLGISELTNDCRGIEEGYADGHKGATLALEIFCYRLAKYIASYTVPLGRLDAVVFTGGIGENSDIIREKVLNMLQIFNFHVDSERNKAARFGKKGIITTDNSTVAMVIPTNEEWVIAEDSIKLITK.

N10 is a Mg(2+) binding site. K17 is an ATP binding site. R91 lines the substrate pocket. Residue D148 is the Proton donor/acceptor of the active site. ATP contacts are provided by residues 208-212, 283-285, and 331-335; these read HLGNG, DCR, and GIGEN. E385 provides a ligand contact to Mg(2+).

Belongs to the acetokinase family. Homodimer. It depends on Mg(2+) as a cofactor. Requires Mn(2+) as cofactor.

It is found in the cytoplasm. The catalysed reaction is acetate + ATP = acetyl phosphate + ADP. The protein operates within metabolic intermediate biosynthesis; acetyl-CoA biosynthesis; acetyl-CoA from acetate: step 1/2. Its function is as follows. Catalyzes the formation of acetyl phosphate from acetate and ATP. Can also catalyze the reverse reaction. This chain is Acetate kinase, found in Shewanella sp. (strain ANA-3).